The primary structure comprises 225 residues: Thymidylate kinase (225 aa).

Residue 12-19 (GGEGAGKS) coordinates ATP.

Belongs to the thymidylate kinase family.

The enzyme catalyses dTMP + ATP = dTDP + ADP. Its function is as follows. Phosphorylation of dTMP to form dTDP in both de novo and salvage pathways of dTTP synthesis. The chain is Thymidylate kinase from Chelativorans sp. (strain BNC1).